Reading from the N-terminus, the 602-residue chain is Cholinesterase (602 aa).

Positions 1–28 (MQSKGTIISIQFLLRFLLLWVLIGKSHT) are cleaved as a signal peptide. Asparagine 85 carries N-linked (GlcNAc...) asparagine glycosylation. Cysteine 93 and cysteine 120 are disulfide-bonded. A glycan (N-linked (GlcNAc...) asparagine) is linked at asparagine 134. Residue 144–145 (GG) coordinates substrate. Serine 226 functions as the Acyl-ester intermediate in the catalytic mechanism. Serine 226 is modified (phosphoserine). N-linked (GlcNAc...) asparagine glycosylation is found at asparagine 269 and asparagine 284. An intrachain disulfide couples cysteine 280 to cysteine 291. Glutamate 353 serves as the catalytic Charge relay system. N-linked (GlcNAc...) asparagine glycosylation occurs at asparagine 369. Cysteines 428 and 547 form a disulfide. Histidine 466 functions as the Charge relay system in the catalytic mechanism. Residues asparagine 483, asparagine 509, asparagine 513, and asparagine 514 are each glycosylated (N-linked (GlcNAc...) asparagine).

Belongs to the type-B carboxylesterase/lipase family. In terms of assembly, homotetramer; disulfide-linked. Dimer of dimers.

Its subcellular location is the secreted. The catalysed reaction is an acylcholine + H2O = a carboxylate + choline + H(+). Functionally, esterase with broad substrate specificity. Contributes to the inactivation of the neurotransmitter acetylcholine. Can degrade neurotoxic organophosphate esters. This chain is Cholinesterase (BCHE), found in Felis catus (Cat).